A 267-amino-acid polypeptide reads, in one-letter code: ATP synthase subunit a (267 aa).

Helical transmembrane passes span 38–58 (WHID…FVFY), 98–118 (IAPL…MDLI), 145–165 (NITF…SIKI), 208–228 (LFGN…MPWW), and 238–258 (AIFH…LTIV).

This sequence belongs to the ATPase A chain family. In terms of assembly, F-type ATPases have 2 components, CF(1) - the catalytic core - and CF(0) - the membrane proton channel. CF(1) has five subunits: alpha(3), beta(3), gamma(1), delta(1), epsilon(1). CF(0) has three main subunits: a(1), b(2) and c(9-12). The alpha and beta chains form an alternating ring which encloses part of the gamma chain. CF(1) is attached to CF(0) by a central stalk formed by the gamma and epsilon chains, while a peripheral stalk is formed by the delta and b chains.

Its subcellular location is the cell inner membrane. Functionally, key component of the proton channel; it plays a direct role in the translocation of protons across the membrane. This is ATP synthase subunit a from Psychromonas ingrahamii (strain DSM 17664 / CCUG 51855 / 37).